Reading from the N-terminus, the 232-residue chain is Ion-translocating oxidoreductase complex subunit E (232 aa).

A run of 6 helical transmembrane segments spans residues 18–38 (ALVQLLGLCPLLAVTATVTNG), 39–59 (LGLGLATTLVLIGSNATVSII), 69–89 (IPIFVMIIAAFVTVVQLLMNA), 93–113 (ELYQALGIFIPLIVTNCAIIG), 128–148 (AFDGLMMGLGFTVVLVLLGAM), and 182–202 (PFLLAILPPGAFLGMGLLIAA).

Belongs to the NqrDE/RnfAE family. In terms of assembly, the complex is composed of six subunits: RnfA, RnfB, RnfC, RnfD, RnfE and RnfG.

It is found in the cell inner membrane. Part of a membrane-bound complex that couples electron transfer with translocation of ions across the membrane. This chain is Ion-translocating oxidoreductase complex subunit E, found in Pseudoalteromonas atlantica (strain T6c / ATCC BAA-1087).